A 378-amino-acid chain; its full sequence is tRNA-specific 2-thiouridylase MnmA (378 aa).

ATP is bound by residues 12–19 (GLSGGVDS) and M38. An interaction with target base in tRNA region spans residues 98 to 100 (NPD). Residue C103 is the Nucleophile of the active site. The cysteines at positions 103 and 201 are disulfide-linked. G127 serves as a coordination point for ATP. Residues 151–153 (KDQ) are interaction with tRNA. C201 serves as the catalytic Cysteine persulfide intermediate. Residues 319–320 (RY) are interaction with tRNA.

Belongs to the MnmA/TRMU family.

Its subcellular location is the cytoplasm. The catalysed reaction is S-sulfanyl-L-cysteinyl-[protein] + uridine(34) in tRNA + AH2 + ATP = 2-thiouridine(34) in tRNA + L-cysteinyl-[protein] + A + AMP + diphosphate + H(+). Its function is as follows. Catalyzes the 2-thiolation of uridine at the wobble position (U34) of tRNA, leading to the formation of s(2)U34. The polypeptide is tRNA-specific 2-thiouridylase MnmA (Paracidovorax citrulli (strain AAC00-1) (Acidovorax citrulli)).